A 202-amino-acid polypeptide reads, in one-letter code: NNYCKIKCRSGIHTLCKYGTSTKPNCGRSVVKASGLTKAEKLEILKQHNEFRQKVARGLETRGNPGPQPPAKSMNTLVWNDELAQIAQVWASQCKYGHDNCRNTAKYLVGQNIAEQSTTAASFEPVSNMVKMWSDEVKDYQYGSSKNKLNDVGHYTQMVWAKTKEIGCGNIKYIENGWHHHYLVCNYGPAGNIGNEPIYEKK.

Cystine bridges form between cysteine 4-cysteine 16, cysteine 8-cysteine 101, and cysteine 26-cysteine 94. Tyrosine 107 carries the post-translational modification Phosphotyrosine. Lysine 138 is a glycosylation site (N-linked (Glc) (glycation) lysine). Cysteine 168 and cysteine 185 form a disulfide bridge.

This sequence belongs to the CRISP family. Expressed by the venom gland.

It is found in the secreted. In terms of biological role, does not show toxicity when intravenously injected into mice tail. The sequence is that of Venom allergen 5 from Vespa velutina (Asian yellow-legged hornet).